The sequence spans 179 residues: Ribosome maturation factor RimM (179 aa).

In terms of domain architecture, PRC barrel spans 100–176 (HGEYHLTELI…FILLTPPSGL (77 aa)).

The protein belongs to the RimM family. In terms of assembly, binds ribosomal protein uS19.

The protein localises to the cytoplasm. An accessory protein needed during the final step in the assembly of 30S ribosomal subunit, possibly for assembly of the head region. Essential for efficient processing of 16S rRNA. May be needed both before and after RbfA during the maturation of 16S rRNA. It has affinity for free ribosomal 30S subunits but not for 70S ribosomes. This chain is Ribosome maturation factor RimM, found in Prochlorococcus marinus subsp. pastoris (strain CCMP1986 / NIES-2087 / MED4).